The following is a 145-amino-acid chain: Ribonuclease VapC24 (145 aa).

In terms of domain architecture, PINc spans 4 to 123 (IDTNILLYAQ…RHHGVDEFAT (120 aa)). The Mg(2+) site is built by D5 and D106.

Belongs to the PINc/VapC protein family. The cofactor is Mg(2+).

In terms of biological role, toxic component of a type II toxin-antitoxin (TA) system. An RNase. Its cognate antitoxin is VapB24. The protein is Ribonuclease VapC24 of Mycobacterium tuberculosis (strain CDC 1551 / Oshkosh).